A 315-amino-acid polypeptide reads, in one-letter code: CID domain-containing protein 1 (315 aa).

The region spanning 1 to 135 (MADFTEQTLR…RLHEVHQQVK (135 aa)) is the CID domain. Residues 227–273 (MLEEYVKRLKNETNERETLESNLNMLIENVRMSIEHHEKLCREVKRR) adopt a coiled-coil conformation.

The protein is CID domain-containing protein 1 (cids-1) of Caenorhabditis elegans.